A 227-amino-acid polypeptide reads, in one-letter code: Peroxisomal membrane protein 11B (227 aa).

Residues 1–85 (MSLDTVDKLV…RNPGATPMIR (85 aa)) lie on the Cytoplasmic side of the membrane. A helical transmembrane segment spans residues 86–106 (FLAVLANSGEMVYFFFDHFLW). Residues 107–201 (LSRIGSIDAK…IALAEIHPNP (95 aa)) lie on the Lumenal side of the membrane. A helical membrane pass occupies residues 202-222 (FCNHTITLGISGLVSAWAGWY). Topologically, residues 223 to 227 (RNWPS) are cytoplasmic.

The protein belongs to the peroxin-11 family. Homooligomer. Interacts with ARC5 and FIS1B on peroxisomes. In terms of tissue distribution, expressed in roots, leaves and developing siliques.

It is found in the peroxisome membrane. Involved in peroxisomal proliferation. Promotes peroxisomal duplication, aggregation or elongation without fission. This is Peroxisomal membrane protein 11B (PEX11B) from Arabidopsis thaliana (Mouse-ear cress).